A 502-amino-acid polypeptide reads, in one-letter code: Capsid protein (502 aa).

Disordered stretches follow at residues 369–392 (ISEL…SDYD) and 405–487 (LTDS…TRKQ). Positions 447 to 456 (SRRRKRRRRS) are enriched in basic residues.

The protein belongs to the anelloviridae capsid protein family.

It localises to the virion. Its function is as follows. Self-assembles to form an icosahedral capsid with a T=1 symmetry, about 30 nm in diameter, and consisting of 60 capsid proteins. The capsid encapsulates the genomic DNA. Capsid protein is involved in attachment and entry into the host cell. This is Capsid protein from Tupaia.